The following is a 392-amino-acid chain: LL-diaminopimelate aminotransferase (392 aa).

Residues Tyr15, Gly40, Lys104, Tyr128, and Asn178 each coordinate substrate. Pyridoxal 5'-phosphate-binding positions include 103-104 (SK), Tyr128, Asn178, Tyr209, and 237-239 (SVS). Residue Lys240 is modified to N6-(pyridoxal phosphate)lysine. Arg248 is a binding site for pyridoxal 5'-phosphate. Arg366 is a substrate binding site.

This sequence belongs to the class-I pyridoxal-phosphate-dependent aminotransferase family. LL-diaminopimelate aminotransferase subfamily. As to quaternary structure, homodimer. The cofactor is pyridoxal 5'-phosphate.

The enzyme catalyses (2S,6S)-2,6-diaminopimelate + 2-oxoglutarate = (S)-2,3,4,5-tetrahydrodipicolinate + L-glutamate + H2O + H(+). Its pathway is amino-acid biosynthesis; L-lysine biosynthesis via DAP pathway; LL-2,6-diaminopimelate from (S)-tetrahydrodipicolinate (aminotransferase route): step 1/1. In terms of biological role, involved in the synthesis of meso-diaminopimelate (m-DAP or DL-DAP), required for both lysine and peptidoglycan biosynthesis. Catalyzes the direct conversion of tetrahydrodipicolinate to LL-diaminopimelate. In Desulforudis audaxviator (strain MP104C), this protein is LL-diaminopimelate aminotransferase.